The sequence spans 320 residues: Ferrochelatase (320 aa).

His-194 and Glu-275 together coordinate Fe cation.

It belongs to the ferrochelatase family. Monomer.

The protein localises to the cytoplasm. It catalyses the reaction heme b + 2 H(+) = protoporphyrin IX + Fe(2+). The protein operates within porphyrin-containing compound metabolism; protoheme biosynthesis; protoheme from protoporphyrin-IX: step 1/1. Catalyzes the ferrous insertion into protoporphyrin IX. The protein is Ferrochelatase of Escherichia coli O139:H28 (strain E24377A / ETEC).